We begin with the raw amino-acid sequence, 229 residues long: Response regulator SaeR (229 aa).

The Response regulatory domain maps to 3–116 (HLLIVDDEKD…ELVLRTNNLL (114 aa)). Asp51 carries the post-translational modification 4-aspartylphosphate. The ompR/PhoB-type DNA-binding region spans 128–227 (IEQLEFDGLV…VWGLGYKFER (100 aa)).

In terms of processing, phosphorylated by SaeS.

It localises to the cytoplasm. Functionally, member of the two-component regulatory system SaeR/SaeS. Probably functions as a transcriptional regulator via a specific DNA-binding domain, recognizing motifs near the promoter sequences of target genes. The protein is Response regulator SaeR (saeR) of Staphylococcus epidermidis (strain ATCC 35984 / DSM 28319 / BCRC 17069 / CCUG 31568 / BM 3577 / RP62A).